The following is a 442-amino-acid chain: Gamma-glutamyl phosphate reductase (442 aa).

Belongs to the gamma-glutamyl phosphate reductase family.

The protein resides in the cytoplasm. It carries out the reaction L-glutamate 5-semialdehyde + phosphate + NADP(+) = L-glutamyl 5-phosphate + NADPH + H(+). The protein operates within amino-acid biosynthesis; L-proline biosynthesis; L-glutamate 5-semialdehyde from L-glutamate: step 2/2. In terms of biological role, catalyzes the NADPH-dependent reduction of L-glutamate 5-phosphate into L-glutamate 5-semialdehyde and phosphate. The product spontaneously undergoes cyclization to form 1-pyrroline-5-carboxylate. This chain is Gamma-glutamyl phosphate reductase, found in Campylobacter curvus (strain 525.92).